We begin with the raw amino-acid sequence, 354 residues long: UDP-glucose 4-epimerase 1 (354 aa).

8–39 (TILVTGGAGYIGSHTVLQLLQLGFRVVVLDNL) provides a ligand contact to NAD(+). Ser133 is a substrate binding site. Tyr157 functions as the Proton acceptor in the catalytic mechanism.

This sequence belongs to the NAD(P)-dependent epimerase/dehydratase family. Requires NAD(+) as cofactor.

The catalysed reaction is UDP-alpha-D-glucose = UDP-alpha-D-galactose. It functions in the pathway carbohydrate metabolism; galactose metabolism. Functionally, catalyzes the interconversion between UDP-glucose and UDP-galactose. This is UDP-glucose 4-epimerase 1 (UGE-1) from Oryza sativa subsp. japonica (Rice).